Consider the following 56-residue polypeptide: Ovomucoid (56 aa).

The Kazal-like domain maps to 6–56 (VDCSEYPKPACTLEYRPLCGSDSKTYANKCNFCNAVVESNGTLTLSHFGKC). 3 cysteine pairs are disulfide-bonded: cysteine 8–cysteine 38, cysteine 16–cysteine 35, and cysteine 24–cysteine 56. N-linked (GlcNAc...) asparagine glycosylation is present at asparagine 45.

It localises to the secreted. This Oreortyx pictus (Mountain quail) protein is Ovomucoid.